Consider the following 552-residue polypeptide: Hydroxylamine reductase (552 aa).

[4Fe-4S] cluster-binding residues include Cys3, Cys6, Cys15, and Cys21. Hybrid [4Fe-2O-2S] cluster-binding residues include His247, Glu271, Cys315, Cys407, Cys435, Cys460, Glu495, and Lys497. At Cys407 the chain carries Cysteine persulfide.

It belongs to the HCP family. Requires [4Fe-4S] cluster as cofactor. The cofactor is hybrid [4Fe-2O-2S] cluster.

The protein localises to the cytoplasm. The catalysed reaction is A + NH4(+) + H2O = hydroxylamine + AH2 + H(+). Its function is as follows. Catalyzes the reduction of hydroxylamine to form NH(3) and H(2)O. In Thermosipho melanesiensis (strain DSM 12029 / CIP 104789 / BI429), this protein is Hydroxylamine reductase.